Reading from the N-terminus, the 450-residue chain is MGAPPGYRPSAWVHLLHQLPRADFQLRPVPSGFAPQEQEYQQALLLVAALAGLGLGLSLIFIAVYLIRFCCCRPPEPPGSKTPSPGGGCVTWSCIVALLAGCIGIGIGFYGNSETSDGVSQLSSALLHANHTLSAIDHLVLETVERLGEAVRTELTTLEEVLEPRTELVAAARGARRQAEAVAQQLQGLAFWQGVPLSPLQVAEDVSFVEEYRWLAYVLLLLLELLVCLFTLLGLAKQSKWLVIVMTVMSLLVLVLSWGSMGLEAATAVGLSDFYSNPDPYVLNLTQEETGLSSDILSYYFLCNQAVSNPFQQRLTLSQRALANIHSQLLGLEREAVPQFPSAQKPLLSLEETLNVTEGNFHQLVALLHCRGLHKDYGAALRGLCEDALEGLLFLLLFSLLSAGALATALCSLPRAWALFPPSDDYDDTDDDDPFNPQESKRFVQWQSSI.

Residues 1–43 (MGAPPGYRPSAWVHLLHQLPRADFQLRPVPSGFAPQEQEYQQA) are Extracellular-facing. Residues 44-64 (LLLVAALAGLGLGLSLIFIAV) form a helical membrane-spanning segment. Residues 65-88 (YLIRFCCCRPPEPPGSKTPSPGGG) are Cytoplasmic-facing. A helical transmembrane segment spans residues 89-109 (CVTWSCIVALLAGCIGIGIGF). Residues 110-214 (YGNSETSDGV…DVSFVEEYRW (105 aa)) lie on the Extracellular side of the membrane. A glycan (N-linked (GlcNAc...) asparagine) is linked at asparagine 130. A helical membrane pass occupies residues 215 to 235 (LAYVLLLLLELLVCLFTLLGL). Residues 236–240 (AKQSK) are Cytoplasmic-facing. Residues 241–261 (WLVIVMTVMSLLVLVLSWGSM) traverse the membrane as a helical segment. Residues 262-390 (GLEAATAVGL…LRGLCEDALE (129 aa)) lie on the Extracellular side of the membrane. 2 N-linked (GlcNAc...) asparagine glycosylation sites follow: asparagine 284 and asparagine 355. Cysteine 303 and cysteine 370 form a disulfide bridge. Residues 391–411 (GLLFLLLFSLLSAGALATALC) traverse the membrane as a helical segment. Residues 412 to 450 (SLPRAWALFPPSDDYDDTDDDDPFNPQESKRFVQWQSSI) are Cytoplasmic-facing. Positions 428–450 (DTDDDDPFNPQESKRFVQWQSSI) are disordered. Serine 440 is subject to Phosphoserine.

The protein belongs to the tweety family. In terms of assembly, homotetramer; disulfide-linked. Homodimer. N-glycosylated. Contains high-mannose, hybrid and complex oligosaccharides.

Its subcellular location is the cell membrane. The catalysed reaction is chloride(in) = chloride(out). It catalyses the reaction L-glutamate(out) = L-glutamate(in). Calcium-independent, swelling-dependent volume-regulated anion channel (VRAC-swell) which plays a pivotal role in the process of regulatory volume decrease (RVD) in the brain through the efflux of anions like chloride and organic osmolytes like glutamate. The sequence is that of Protein tweety homolog 1 (TTYH1) from Macaca fascicularis (Crab-eating macaque).